We begin with the raw amino-acid sequence, 159 residues long: SsrA-binding protein (159 aa).

This sequence belongs to the SmpB family.

The protein localises to the cytoplasm. Functionally, required for rescue of stalled ribosomes mediated by trans-translation. Binds to transfer-messenger RNA (tmRNA), required for stable association of tmRNA with ribosomes. tmRNA and SmpB together mimic tRNA shape, replacing the anticodon stem-loop with SmpB. tmRNA is encoded by the ssrA gene; the 2 termini fold to resemble tRNA(Ala) and it encodes a 'tag peptide', a short internal open reading frame. During trans-translation Ala-aminoacylated tmRNA acts like a tRNA, entering the A-site of stalled ribosomes, displacing the stalled mRNA. The ribosome then switches to translate the ORF on the tmRNA; the nascent peptide is terminated with the 'tag peptide' encoded by the tmRNA and targeted for degradation. The ribosome is freed to recommence translation, which seems to be the essential function of trans-translation. The polypeptide is SsrA-binding protein (Idiomarina loihiensis (strain ATCC BAA-735 / DSM 15497 / L2-TR)).